The primary structure comprises 215 residues: Putative zinc finger protein ORF121 (215 aa).

An RING-type; degenerate zinc finger spans residues 53 to 105; that stretch reads CVICMEPTYTKKTLAECDIEGGALRVTTMPCPTHYICDNCIRQEMEDKCPICR.

This Magallana gigas (Pacific oyster) protein is Putative zinc finger protein ORF121.